We begin with the raw amino-acid sequence, 82 residues long: DNA-directed RNA polymerase subunit omega (82 aa).

The protein belongs to the RNA polymerase subunit omega family. In terms of assembly, in cyanobacteria the RNAP catalytic core is composed of 2 alpha, 1 beta, 1 beta', 1 gamma and 1 omega subunit. When a sigma factor is associated with the core the holoenzyme is formed, which can initiate transcription.

It carries out the reaction RNA(n) + a ribonucleoside 5'-triphosphate = RNA(n+1) + diphosphate. Functionally, promotes RNA polymerase assembly. Latches the N- and C-terminal regions of the beta' subunit thereby facilitating its interaction with the beta and alpha subunits. This Trichodesmium erythraeum (strain IMS101) protein is DNA-directed RNA polymerase subunit omega.